Reading from the N-terminus, the 678-residue chain is Methionine--tRNA ligase (678 aa).

The 'HIGH' region motif lies at 14 to 24 (PYANGSIHLGH). Residues Cys145, Cys148, Cys158, and Cys161 each coordinate Zn(2+). Positions 331–335 (KMSKS) match the 'KMSKS' region motif. Residue Lys334 participates in ATP binding. Residues 576 to 678 (AFAAVDLRIA…SGAKPGQRVK (103 aa)) form the tRNA-binding domain.

It belongs to the class-I aminoacyl-tRNA synthetase family. MetG type 1 subfamily. In terms of assembly, homodimer. The cofactor is Zn(2+).

The protein resides in the cytoplasm. It catalyses the reaction tRNA(Met) + L-methionine + ATP = L-methionyl-tRNA(Met) + AMP + diphosphate. In terms of biological role, is required not only for elongation of protein synthesis but also for the initiation of all mRNA translation through initiator tRNA(fMet) aminoacylation. The chain is Methionine--tRNA ligase from Ectopseudomonas mendocina (strain ymp) (Pseudomonas mendocina).